A 269-amino-acid chain; its full sequence is MRRMTIGTVDGLHYELHGGPIAGREVVLLSSGLGGSGAFWAPQMQALTQRWPVVTYDHRGTGRSVRELPPRYTLAHMADDMVKVMDALGLAKAHVVGHAAGGNAGLQLALDHPDRLAKLVVVNGWSRPDPHIRRCFDTRLHLLNDTGPEAYVHAQPIFLYPADWISRNHTRLMAEEAHHVAAFPPREVMLARINALLAFDIDARLEDITHRVLISASADDMLVPMSCSQRLAGRLPNADFQQVAWGGHGFTVTDPETFNEALVSFLEGA.

One can recognise an AB hydrolase-1 domain in the interval 26 to 144 (VVLLSSGLGG…CFDTRLHLLN (119 aa)).

This sequence belongs to the AB hydrolase superfamily. Hydrolase RutD family.

It catalyses the reaction carbamate + 2 H(+) = NH4(+) + CO2. Involved in pyrimidine catabolism. May facilitate the hydrolysis of carbamate, a reaction that can also occur spontaneously. The protein is Putative carbamate hydrolase RutD of Caulobacter vibrioides (strain ATCC 19089 / CIP 103742 / CB 15) (Caulobacter crescentus).